A 293-amino-acid polypeptide reads, in one-letter code: Ribonuclease HIII (293 aa).

Residues 78 to 293 (LPLIGTDEVG…TEKAKKRLER (216 aa)) form the RNase H type-2 domain. Asp-84, Glu-85, and Asp-187 together coordinate a divalent metal cation.

Belongs to the RNase HII family. RnhC subfamily. Mn(2+) is required as a cofactor. Requires Mg(2+) as cofactor.

It is found in the cytoplasm. It catalyses the reaction Endonucleolytic cleavage to 5'-phosphomonoester.. Its function is as follows. Endonuclease that specifically degrades the RNA of RNA-DNA hybrids. The polypeptide is Ribonuclease HIII (Streptococcus pneumoniae (strain 70585)).